Consider the following 92-residue polypeptide: 11 kDa excretory-secretory protein (92 aa).

The polypeptide is 11 kDa excretory-secretory protein (Trichostrongylus colubriformis (Black scour worm)).